A 394-amino-acid chain; its full sequence is MIIKNAGQIITFDSEGNFKLIKDKSIVIENNIISDITDNKNNDDAIDASNMVVMPGFIDSHTHLAYAGTRENELYMRSHGQSYLDILNLGGGIHKTMNDTESSGEDKIFNETIKRVDESILNGTTYLEIKSGYGKTINGERRLINAIKRIKSIYRNVKITLLAHAVPDNINEYDYAGYFINNMIPAFKNDVDFLDVFCDAGAFSRKSTEMILEAGVSSRLKLKIHADELKNIGCIDLCKRFNFTSVDHLLNTRNDQLNYIKDSGAVATILPVTAFSLDSDYVNAQRFINKKIDVAIASDASPASYNSNMIFAIYLAVRYCNISLENAIKAATINGARSLKIDESTGSIEPGKNADLIILDIDDYKKLPYMYMSRLVRYSFINGIKIVDNFNLIH.

Fe(3+) is bound by residues His61 and His63. Residues His61 and His63 each contribute to the Zn(2+) site. 4-imidazolone-5-propanoate-binding residues include Arg70, Tyr133, and His164. Tyr133 contributes to the N-formimidoyl-L-glutamate binding site. His225 serves as a coordination point for Fe(3+). A Zn(2+)-binding site is contributed by His225. 4-imidazolone-5-propanoate is bound at residue Glu228. Asp299 contacts Fe(3+). Position 299 (Asp299) interacts with Zn(2+).

It belongs to the metallo-dependent hydrolases superfamily. HutI family. The cofactor is Zn(2+). Requires Fe(3+) as cofactor.

It is found in the cytoplasm. It catalyses the reaction 4-imidazolone-5-propanoate + H2O = N-formimidoyl-L-glutamate. It functions in the pathway amino-acid degradation; L-histidine degradation into L-glutamate; N-formimidoyl-L-glutamate from L-histidine: step 3/3. Its function is as follows. Catalyzes the hydrolytic cleavage of the carbon-nitrogen bond in imidazolone-5-propanoate to yield N-formimidoyl-L-glutamate. It is the third step in the universal histidine degradation pathway. The protein is Imidazolonepropionase of Picrophilus torridus (strain ATCC 700027 / DSM 9790 / JCM 10055 / NBRC 100828 / KAW 2/3).